Reading from the N-terminus, the 282-residue chain is Orotidine 5'-phosphate decarboxylase (282 aa).

Lys-95 serves as the catalytic Proton donor.

This sequence belongs to the OMP decarboxylase family. Type 2 subfamily.

It catalyses the reaction orotidine 5'-phosphate + H(+) = UMP + CO2. It functions in the pathway pyrimidine metabolism; UMP biosynthesis via de novo pathway; UMP from orotate: step 2/2. The sequence is that of Orotidine 5'-phosphate decarboxylase from Polaromonas naphthalenivorans (strain CJ2).